Reading from the N-terminus, the 186-residue chain is MKMEVIFKTDLRSSSQVVFHAGSLYNWFSVEIINSGRIVTTAIKTLLSTVKYDIVKSARIYAGQGYTEHQAQEEWNMILHVLFEEETESSASSESIHEKNDNETNECTSSFETLFEQEPPSEVPKDSKLYMLAQKTVQHIEQYGKAPDFNKVIRAHNFIQTIHGTPLKEEEKEVVRIMVIKLLKKK.

This sequence belongs to the asfivirus phosphoprotein p30 family. In terms of assembly, oligomer. Interacts with host HNRNPK.

The protein resides in the host cytoplasm. Its subcellular location is the host nucleus. It localises to the virion. Modifies the subcellular distribution of heterogeneous nuclear ribonucleoprotein K (HNRNPK) and may contribute to modulate HNRNPK functions related to processing and export of mRNAs during ASFV infection. Necessary for virus internalization. The polypeptide is Phosphoprotein p30 (Ornithodoros (relapsing fever ticks)).